The chain runs to 432 residues: MGKSVAILGAQWGDEGKGKIVDLLTDRVKYVVRYQGGHNAGHTLIINGEKTVLRLIPSGILRENVTCLIGNGVVLSPEALMKEMGELEACGINVRERLKISEACPLILPYHVAMDHAREAALGKNKIGTTGRGIGPAYEDKVARRGLRVSDLFDKEAFATKLKDILDLYNFQLVHYYKVEPVDFQKTLDDVFAVADVIKGMVADVTTLLHQARKEGVNILFEGAQGTMLDIDHGTYPFVTSSNTTAGGVATGAGFGPRNLDYVLGIIKAYCTRVGSGPFTTELFNEEGETIARKGNEFGAVTGRPRRCGWFDAVAVRRAVQINSISGFCMTKLDVLDGFETLKICTAYKMPNGEIVEYAPMAAKDWEGVEPIYETMPGWSENTFGVIKYEALPQAALDYIKRIEELVGVPVDILSTGPDRIETMILRDPFVA.

GTP contacts are provided by residues 13-19 (GDEGKGK) and 41-43 (GHT). D14 (proton acceptor) is an active-site residue. Residues D14 and G41 each contribute to the Mg(2+) site. Residues 14–17 (DEGK), 39–42 (NAGH), T130, R144, Q225, T240, and R304 contribute to the IMP site. H42 acts as the Proton donor in catalysis. 300–306 (AVTGRPR) contacts substrate. Residues R306, 332–334 (KLD), and 415–417 (STG) contribute to the GTP site.

Belongs to the adenylosuccinate synthetase family. Homodimer. Mg(2+) serves as cofactor.

The protein localises to the cytoplasm. The catalysed reaction is IMP + L-aspartate + GTP = N(6)-(1,2-dicarboxyethyl)-AMP + GDP + phosphate + 2 H(+). It participates in purine metabolism; AMP biosynthesis via de novo pathway; AMP from IMP: step 1/2. Functionally, plays an important role in the de novo pathway of purine nucleotide biosynthesis. Catalyzes the first committed step in the biosynthesis of AMP from IMP. The chain is Adenylosuccinate synthetase from Haemophilus ducreyi (strain 35000HP / ATCC 700724).